A 778-amino-acid chain; its full sequence is Semaphorin-3ab (778 aa).

An N-terminal signal peptide occupies residues 1 to 17 (MDYLWWIVLLIWTLIAP). The Sema domain occupies 32–515 (RLKPSYKEML…SAIGVSQMPL (484 aa)). Asparagine 54 is a glycosylation site (N-linked (GlcNAc...) asparagine). The cysteines at positions 105 and 116 are disulfide-linked. N-linked (GlcNAc...) asparagine glycosylation is present at asparagine 127. 4 disulfides stabilise this stretch: cysteine 134–cysteine 143, cysteine 270–cysteine 382, cysteine 294–cysteine 342, and cysteine 518–cysteine 536. Residues 579–668 (GEAGLLDKTV…FIQTLLRLTL (90 aa)) form the Ig-like C2-type domain. Asparagine 593 carries N-linked (GlcNAc...) asparagine glycosylation. Cysteine 652 and cysteine 716 form a disulfide bridge. Residues 727–778 (RRQKANLLHASQSHTSQILHSSQSHAKWKLLQENKKGRNRRTHEMQRAPRSV) form a disordered region. The segment covering 735–751 (HASQSHTSQILHSSQSH) has biased composition (polar residues). The segment covering 756–778 (LLQENKKGRNRRTHEMQRAPRSV) has biased composition (basic and acidic residues).

This sequence belongs to the semaphorin family. As to expression, expressed in rhombomeres three and five, and in the posterior half of newly formed somites which is avoided by ventrally extending motor axons.

The protein resides in the secreted. In terms of biological role, might normally influence the midsegmental pathway choice of the ventrally extending motor axons by contributing to a repulsive domain in the posterior somite. The polypeptide is Semaphorin-3ab (sema3ab) (Danio rerio (Zebrafish)).